Here is a 150-residue protein sequence, read N- to C-terminus: Keratin-associated protein 15-1 (150 aa).

This sequence belongs to the PMG family. As to quaternary structure, interacts with hair keratins. As to expression, expressed at high levels in skin and at lower levels in the developing mammary gland.

Its function is as follows. In the hair cortex, hair keratin intermediate filaments are embedded in an interfilamentous matrix, consisting of hair keratin-associated proteins (KRTAP), which are essential for the formation of a rigid and resistant hair shaft through their extensive disulfide bond cross-linking with abundant cysteine residues of hair keratins. The matrix proteins include the high-sulfur and high-glycine-tyrosine keratins. The polypeptide is Keratin-associated protein 15-1 (Mus musculus (Mouse)).